Reading from the N-terminus, the 183-residue chain is Dual-action ribosomal maturation protein DarP (183 aa).

A disordered region spans residues 1–23 (MTKQPDDWLDEVPDNENDDDDDE). A compositionally biased stretch (acidic residues) spans 7 to 23 (DWLDEVPDNENDDDDDE).

It belongs to the DarP family.

It localises to the cytoplasm. Member of a network of 50S ribosomal subunit biogenesis factors which assembles along the 30S-50S interface, preventing incorrect 23S rRNA structures from forming. Promotes peptidyl transferase center (PTC) maturation. This Cronobacter sakazakii (strain ATCC BAA-894) (Enterobacter sakazakii) protein is Dual-action ribosomal maturation protein DarP.